The primary structure comprises 104 residues: Small ribosomal subunit protein uS10 (104 aa).

This sequence belongs to the universal ribosomal protein uS10 family. Part of the 30S ribosomal subunit.

Its function is as follows. Involved in the binding of tRNA to the ribosomes. In Helicobacter pylori (strain J99 / ATCC 700824) (Campylobacter pylori J99), this protein is Small ribosomal subunit protein uS10.